The chain runs to 180 residues: UPF0227 protein Shew_1627 (180 aa).

The protein belongs to the UPF0227 family.

This Shewanella loihica (strain ATCC BAA-1088 / PV-4) protein is UPF0227 protein Shew_1627.